The primary structure comprises 156 residues: Ribosome maturation factor RimP (156 aa).

It belongs to the RimP family.

The protein localises to the cytoplasm. In terms of biological role, required for maturation of 30S ribosomal subunits. In Lysinibacillus sphaericus (strain C3-41), this protein is Ribosome maturation factor RimP.